Here is a 72-residue protein sequence, read N- to C-terminus: Metallothionein-like protein type 2 A (72 aa).

This sequence belongs to the metallothionein superfamily. Type 15 family. As to expression, leaves and roots.

In terms of biological role, metallothioneins have a high content of cysteine residues that bind various heavy metals. The chain is Metallothionein-like protein type 2 A (MTA) from Solanum lycopersicum (Tomato).